Consider the following 221-residue polypeptide: Deoxyribose-phosphate aldolase (221 aa).

Asp-89 (proton donor/acceptor) is an active-site residue. The active-site Schiff-base intermediate with acetaldehyde is Lys-151. The Proton donor/acceptor role is filled by Lys-180.

Belongs to the DeoC/FbaB aldolase family. DeoC type 1 subfamily.

Its subcellular location is the cytoplasm. It catalyses the reaction 2-deoxy-D-ribose 5-phosphate = D-glyceraldehyde 3-phosphate + acetaldehyde. The protein operates within carbohydrate degradation; 2-deoxy-D-ribose 1-phosphate degradation; D-glyceraldehyde 3-phosphate and acetaldehyde from 2-deoxy-alpha-D-ribose 1-phosphate: step 2/2. In terms of biological role, catalyzes a reversible aldol reaction between acetaldehyde and D-glyceraldehyde 3-phosphate to generate 2-deoxy-D-ribose 5-phosphate. This is Deoxyribose-phosphate aldolase from Brevibacillus brevis (strain 47 / JCM 6285 / NBRC 100599).